Consider the following 389-residue polypeptide: MLLALAQWLQNDYGFLRVFNYLTFRAVMASLTALVIGLGFGPFVIRRLTELKVGQAVRSYGPQTHLVKAGTPTMGGVLVLIGIAVSTLLWADWGNRFIWIVLLVTLGYGAIGWVDDYRKVVHRDPKGMSSREKFFWQTVIGLFAAAYLAFSVSETSNMRVLELFMEWVRSGLSLNLPAKSHLIVPFFKEISYPLGVFGFIILTYLVIVGSSNAVNLTDGLDGLVIMPVVLVGSALGVFAYVMGSAVYSKYLLFPHIPGAGELLIFCSAMAGAGLAFLWFNAHPAQVFMGDVGALALGGALGTIAVIVRQEIVLFIMGGIFVAETVSVMLQVTWFKFTKKRYGEGRRLFRMAPLHHHFELSGWKETQVVVRFWVITMMLVLIGLSTLKLR.

The next 10 helical transmembrane spans lie at 25 to 45 (RAVM…PFVI), 74 to 94 (MGGV…ADWG), 97 to 117 (FIWI…VDDY), 134 to 154 (FFWQ…SVSE), 190 to 210 (ISYP…IVGS), 222 to 242 (GLVI…AYVM), 259 to 279 (AGEL…FLWF), 286 to 306 (VFMG…IAVI), 311 to 331 (IVLF…MLQV), and 366 to 386 (QVVV…LSTL).

It belongs to the glycosyltransferase 4 family. MraY subfamily. It depends on Mg(2+) as a cofactor.

The protein resides in the cell inner membrane. The enzyme catalyses UDP-N-acetyl-alpha-D-muramoyl-L-alanyl-gamma-D-glutamyl-meso-2,6-diaminopimeloyl-D-alanyl-D-alanine + di-trans,octa-cis-undecaprenyl phosphate = di-trans,octa-cis-undecaprenyl diphospho-N-acetyl-alpha-D-muramoyl-L-alanyl-D-glutamyl-meso-2,6-diaminopimeloyl-D-alanyl-D-alanine + UMP. It participates in cell wall biogenesis; peptidoglycan biosynthesis. Functionally, catalyzes the initial step of the lipid cycle reactions in the biosynthesis of the cell wall peptidoglycan: transfers peptidoglycan precursor phospho-MurNAc-pentapeptide from UDP-MurNAc-pentapeptide onto the lipid carrier undecaprenyl phosphate, yielding undecaprenyl-pyrophosphoryl-MurNAc-pentapeptide, known as lipid I. In Ralstonia pickettii (strain 12J), this protein is Phospho-N-acetylmuramoyl-pentapeptide-transferase.